A 245-amino-acid chain; its full sequence is NAD(P)H-quinone oxidoreductase subunit K (245 aa).

Cys58, Cys59, Cys123, and Cys154 together coordinate [4Fe-4S] cluster.

It belongs to the complex I 20 kDa subunit family. As to quaternary structure, NDH-1 can be composed of about 15 different subunits; different subcomplexes with different compositions have been identified which probably have different functions. [4Fe-4S] cluster serves as cofactor.

The protein localises to the cellular thylakoid membrane. It catalyses the reaction a plastoquinone + NADH + (n+1) H(+)(in) = a plastoquinol + NAD(+) + n H(+)(out). It carries out the reaction a plastoquinone + NADPH + (n+1) H(+)(in) = a plastoquinol + NADP(+) + n H(+)(out). NDH-1 shuttles electrons from an unknown electron donor, via FMN and iron-sulfur (Fe-S) centers, to quinones in the respiratory and/or the photosynthetic chain. The immediate electron acceptor for the enzyme in this species is believed to be plastoquinone. Couples the redox reaction to proton translocation, and thus conserves the redox energy in a proton gradient. Cyanobacterial NDH-1 also plays a role in inorganic carbon-concentration. This Nostoc sp. (strain PCC 7120 / SAG 25.82 / UTEX 2576) protein is NAD(P)H-quinone oxidoreductase subunit K.